Consider the following 350-residue polypeptide: Phosphatidylinositol transfer protein PDR17 (350 aa).

Residues 139 to 297 (KVAVENETGK…LYNGLLDFKY (159 aa)) form the CRAL-TRIO domain.

In terms of assembly, interacts with phosphatidylserine decarboxylase PSD2. Also interacts with PBI1.

The protein localises to the cytoplasm. It is found in the microsome. The catalysed reaction is a 1,2-diacyl-sn-glycero-3-phospho-(1D-myo-inositol)(in) = a 1,2-diacyl-sn-glycero-3-phospho-(1D-myo-inositol)(out). Functionally, has phosphatidylinositol transfer activity. Involved in the regulation of the phospholipid composition of plasma- and endomembranes. Altering plasma membrane composition may provide a possible mechanism for multidrug resistance. Contributes to efficient phospholipase D1 activation and phospholipase B1 inhibition in the regulation of phospholipid turnover. Forms a complex with phosphatidylserine decarboxylase PSD2 that seems essential for maintenance of vacuolar phosphatidylethanolamine (PE) levels. Allows interorganelle phosphatidylserine (PtdSer) transport via a process that involves the acceptor membrane complex PDR17-PDS2 that binds to PBI1 which in turn ligates to SCS2 and phosphatidic acid present in the donor membrane, forming a zone of apposition that facilitates PtdSer transfer. The chain is Phosphatidylinositol transfer protein PDR17 from Saccharomyces cerevisiae (strain ATCC 204508 / S288c) (Baker's yeast).